A 262-amino-acid polypeptide reads, in one-letter code: R3H domain-containing protein 4 (262 aa).

Disordered regions lie at residues 1–27 and 132–155; these read MVAL…PGCL and YLED…RRED. Over residues 146–155 the composition is skewed to basic and acidic residues; the sequence is GRGEDRRRED. Residues 182–245 enclose the R3H domain; the sequence is METLESWEER…RRQMKVSNRH (64 aa).

It localises to the nucleus. This is R3H domain-containing protein 4 (R3hdm4) from Mus musculus (Mouse).